A 757-amino-acid polypeptide reads, in one-letter code: Serine/threonine-protein phosphatase with EF-hands 2 (757 aa).

Residues 21-46 (KAAALIQRWYRRYMARLEMRRRCTWN) enclose the IQ domain. The interval 128 to 544 (ATALVEAFRL…PHIVQYQANK (417 aa)) is catalytic. Residues D179, H181, D208, and N240 each contribute to the Mn(2+) site. Residue H241 is the Proton donor of the active site. Residue H292 participates in Mn(2+) binding. A disordered region spans residues 318-349 (CKTRKESENREEQKRKDNQTSSGQKPTPWFLP). Basic and acidic residues predominate over residues 321 to 335 (RKESENREEQKRKDN). H492 serves as a coordination point for Mn(2+). EF-hand domains are found at residues 572-607 (AHSS…VLHL), 656-691 (RNRS…FSSH), and 696-731 (ITDD…VEQS). Ca(2+)-binding residues include D585, D587, S589, D596, D669, D671, S673, E680, D709, N711, D713, H715, and E720.

It belongs to the PPP phosphatase family. It depends on Mn(2+) as a cofactor. Detected in retina, more specifically in photoreceptors.

It carries out the reaction O-phospho-L-seryl-[protein] + H2O = L-seryl-[protein] + phosphate. The catalysed reaction is O-phospho-L-threonyl-[protein] + H2O = L-threonyl-[protein] + phosphate. With respect to regulation, activated by calcium. Functionally, may play a role in phototransduction. May dephosphorylate photoactivated rhodopsin. May function as a calcium sensing regulator of ionic currents, energy production or synaptic transmission. This Mus musculus (Mouse) protein is Serine/threonine-protein phosphatase with EF-hands 2 (Ppef2).